Consider the following 124-residue polypeptide: UPF0231 protein Sputcn32_0682 (124 aa).

This sequence belongs to the UPF0231 family.

The protein is UPF0231 protein Sputcn32_0682 of Shewanella putrefaciens (strain CN-32 / ATCC BAA-453).